The primary structure comprises 149 residues: Cell division protein SepF (149 aa).

Belongs to the SepF family. In terms of assembly, homodimer. Interacts with FtsZ.

It localises to the cytoplasm. In terms of biological role, cell division protein that is part of the divisome complex and is recruited early to the Z-ring. Probably stimulates Z-ring formation, perhaps through the cross-linking of FtsZ protofilaments. Its function overlaps with FtsA. The polypeptide is Cell division protein SepF (Pelotomaculum thermopropionicum (strain DSM 13744 / JCM 10971 / SI)).